A 358-amino-acid polypeptide reads, in one-letter code: Alanine racemase (358 aa).

The active-site Proton acceptor; specific for D-alanine is the Lys-34. N6-(pyridoxal phosphate)lysine is present on Lys-34. Arg-130 lines the substrate pocket. Residue Tyr-254 is the Proton acceptor; specific for L-alanine of the active site. Met-302 is a binding site for substrate.

This sequence belongs to the alanine racemase family. The cofactor is pyridoxal 5'-phosphate.

The catalysed reaction is L-alanine = D-alanine. Its pathway is amino-acid biosynthesis; D-alanine biosynthesis; D-alanine from L-alanine: step 1/1. Its function is as follows. Catalyzes the interconversion of L-alanine and D-alanine. May also act on other amino acids. In Actinobacillus succinogenes (strain ATCC 55618 / DSM 22257 / CCUG 43843 / 130Z), this protein is Alanine racemase (alr).